A 189-amino-acid polypeptide reads, in one-letter code: 3-isopropylmalate dehydratase small subunit (189 aa).

It belongs to the LeuD family. LeuD type 1 subfamily. As to quaternary structure, heterodimer of LeuC and LeuD.

It catalyses the reaction (2R,3S)-3-isopropylmalate = (2S)-2-isopropylmalate. It functions in the pathway amino-acid biosynthesis; L-leucine biosynthesis; L-leucine from 3-methyl-2-oxobutanoate: step 2/4. Functionally, catalyzes the isomerization between 2-isopropylmalate and 3-isopropylmalate, via the formation of 2-isopropylmaleate. The chain is 3-isopropylmalate dehydratase small subunit from Francisella philomiragia subsp. philomiragia (strain ATCC 25017 / CCUG 19701 / FSC 153 / O#319-036).